A 450-amino-acid polypeptide reads, in one-letter code: tRNA-2-methylthio-N(6)-dimethylallyladenosine synthase (450 aa).

The 121-residue stretch at 8 to 128 (KRLYIKTYGC…LPELIARAHR (121 aa)) folds into the MTTase N-terminal domain. [4Fe-4S] cluster contacts are provided by Cys17, Cys53, Cys91, Cys166, Cys170, and Cys173. Residues 152-382 (RPTGVTAFLT…QALLEQQQLA (231 aa)) form the Radical SAM core domain. The region spanning 385 to 447 (AAQAGRVLPV…RNSLAGVLEL (63 aa)) is the TRAM domain.

The protein belongs to the methylthiotransferase family. MiaB subfamily. In terms of assembly, monomer. [4Fe-4S] cluster is required as a cofactor.

Its subcellular location is the cytoplasm. It carries out the reaction N(6)-dimethylallyladenosine(37) in tRNA + (sulfur carrier)-SH + AH2 + 2 S-adenosyl-L-methionine = 2-methylsulfanyl-N(6)-dimethylallyladenosine(37) in tRNA + (sulfur carrier)-H + 5'-deoxyadenosine + L-methionine + A + S-adenosyl-L-homocysteine + 2 H(+). In terms of biological role, catalyzes the methylthiolation of N6-(dimethylallyl)adenosine (i(6)A), leading to the formation of 2-methylthio-N6-(dimethylallyl)adenosine (ms(2)i(6)A) at position 37 in tRNAs that read codons beginning with uridine. The sequence is that of tRNA-2-methylthio-N(6)-dimethylallyladenosine synthase from Phenylobacterium zucineum (strain HLK1).